We begin with the raw amino-acid sequence, 183 residues long: Peptide methionine sulfoxide reductase MsrA 1 (183 aa).

The active site involves cysteine 12.

Belongs to the MsrA Met sulfoxide reductase family.

The enzyme catalyses L-methionyl-[protein] + [thioredoxin]-disulfide + H2O = L-methionyl-(S)-S-oxide-[protein] + [thioredoxin]-dithiol. It catalyses the reaction [thioredoxin]-disulfide + L-methionine + H2O = L-methionine (S)-S-oxide + [thioredoxin]-dithiol. Has an important function as a repair enzyme for proteins that have been inactivated by oxidation. Catalyzes the reversible oxidation-reduction of methionine sulfoxide in proteins to methionine. The chain is Peptide methionine sulfoxide reductase MsrA 1 (msrA1) from Lactococcus lactis subsp. lactis (strain IL1403) (Streptococcus lactis).